The following is a 511-amino-acid chain: 2,3-bisphosphoglycerate-independent phosphoglycerate mutase (511 aa).

Positions 18 and 68 each coordinate Mn(2+). The active-site Phosphoserine intermediate is the S68. Substrate is bound by residues H129, 159–160 (RD), R191, K197, 261–264 (RSDR), and K329. 5 residues coordinate Mn(2+): D396, H400, D437, H438, and H459. The tract at residues 442 to 464 (ERMTKQAPDGSVRPYGGHTTNPV) is disordered.

Belongs to the BPG-independent phosphoglycerate mutase family. Monomer. Mn(2+) is required as a cofactor.

It catalyses the reaction (2R)-2-phosphoglycerate = (2R)-3-phosphoglycerate. The protein operates within carbohydrate degradation; glycolysis; pyruvate from D-glyceraldehyde 3-phosphate: step 3/5. In terms of biological role, catalyzes the interconversion of 2-phosphoglycerate and 3-phosphoglycerate. This Streptomyces coelicolor (strain ATCC BAA-471 / A3(2) / M145) protein is 2,3-bisphosphoglycerate-independent phosphoglycerate mutase.